A 540-amino-acid polypeptide reads, in one-letter code: Tyrosinase (540 aa).

Positions 1–19 are cleaved as a signal peptide; the sequence is MKSLFLSAVLLQFFETCWS. The Lumenal, melanosome segment spans residues 20-480; the sequence is QFPRPCANSE…LQQAQQIWQW (461 aa). The N-linked (GlcNAc...) asparagine glycan is linked to Asn-87. Cu cation is bound by residues His-182, His-205, and His-214. Residues Asn-233, Asn-293, and Asn-340 are each glycosylated (N-linked (GlcNAc...) asparagine). Residues His-366 and His-370 each coordinate Cu cation. Asn-374 carries N-linked (GlcNAc...) asparagine glycosylation. His-393 is a binding site for Cu cation. The chain crosses the membrane as a helical span at residues 481–501; the sequence is LLGAGILGALIATIVAAVIVF. Residues 502–540 lie on the Cytoplasmic side of the membrane; it reads ARRKRRRNQKRKRAPSFGERQPLLQSSSEEGSSSYQTTL. Positions 511-540 are disordered; sequence KRKRAPSFGERQPLLQSSSEEGSSSYQTTL. A compositionally biased stretch (low complexity) spans 527-540; sequence SSSEEGSSSYQTTL.

Belongs to the tyrosinase family. It depends on Cu(2+) as a cofactor.

It is found in the melanosome membrane. The enzyme catalyses 2 L-dopa + O2 = 2 L-dopaquinone + 2 H2O. The catalysed reaction is L-tyrosine + O2 = L-dopaquinone + H2O. Functionally, this is a copper-containing oxidase that functions in the formation of pigments such as melanins and other polyphenolic compounds. In Oryzias latipes (Japanese rice fish), this protein is Tyrosinase (tyr).